The sequence spans 248 residues: Mannose-binding protein C (248 aa).

A signal peptide spans 1–20; sequence MSLFPSLPLLLLSVVAASYS. Residues 42-99 enclose the Collagen-like domain; that stretch reads GINGFPGKDGRDGTKGEKGEPGQGLRGLQGPPGKLGPPGNPGPSGSPGPKGQKGDPGK. A disordered region spans residues 43–111; that stretch reads INGFPGKDGR…DCDSSLAASE (69 aa). Pro47 carries the post-translational modification 4-hydroxyproline. The segment covering 49–61 has biased composition (basic and acidic residues); that stretch reads KDGRDGTKGEKGE. Residues Pro73, Pro79, Pro82, and Pro88 each carry the 4-hydroxyproline modification. Pro residues predominate over residues 75–87; that stretch reads KLGPPGNPGPSGS. Residues 93-102 show a composition bias toward basic and acidic residues; that stretch reads QKGDPGKSPD. Positions 112–130 form a coiled coil; sequence RKALQTEMARIKKWLTFSL. Residues 134–245 enclose the C-type lectin domain; the sequence is VGNKFFLTNG…CSSSHLAVCE (112 aa). 2 disulfides stabilise this stretch: Cys155–Cys244 and Cys222–Cys236.

In terms of assembly, oligomeric complex of 3 or more homotrimers. Interacts with MASP1 and MASP2. Interacts with MEP1A and MEP1B and may inhibit their catalytic activity. In terms of processing, hydroxylation on proline residues within the sequence motif, GXPG, is most likely to be 4-hydroxy as this fits the requirement for 4-hydroxylation in vertebrates.

Its subcellular location is the secreted. Its function is as follows. Calcium-dependent lectin involved in innate immune defense. Binds mannose, fucose and N-acetylglucosamine on different microorganisms and activates the lectin complement pathway. Binds to late apoptotic cells, as well as to apoptotic blebs and to necrotic cells, but not to early apoptotic cells, facilitating their uptake by macrophages. The polypeptide is Mannose-binding protein C (MBL2) (Pongo pygmaeus (Bornean orangutan)).